The sequence spans 161 residues: 2-C-methyl-D-erythritol 2,4-cyclodiphosphate synthase (161 aa).

2 residues coordinate a divalent metal cation: aspartate 8 and histidine 10. 4-CDP-2-C-methyl-D-erythritol 2-phosphate contacts are provided by residues 8–10 and 34–35; these read DLH and HS. Residue histidine 42 coordinates a divalent metal cation. Residues 56-58 and arginine 142 contribute to the 4-CDP-2-C-methyl-D-erythritol 2-phosphate site; that span reads DIG.

This sequence belongs to the IspF family. In terms of assembly, homotrimer. It depends on a divalent metal cation as a cofactor.

The enzyme catalyses 4-CDP-2-C-methyl-D-erythritol 2-phosphate = 2-C-methyl-D-erythritol 2,4-cyclic diphosphate + CMP. It participates in isoprenoid biosynthesis; isopentenyl diphosphate biosynthesis via DXP pathway; isopentenyl diphosphate from 1-deoxy-D-xylulose 5-phosphate: step 4/6. Functionally, involved in the biosynthesis of isopentenyl diphosphate (IPP) and dimethylallyl diphosphate (DMAPP), two major building blocks of isoprenoid compounds. Catalyzes the conversion of 4-diphosphocytidyl-2-C-methyl-D-erythritol 2-phosphate (CDP-ME2P) to 2-C-methyl-D-erythritol 2,4-cyclodiphosphate (ME-CPP) with a corresponding release of cytidine 5-monophosphate (CMP). The polypeptide is 2-C-methyl-D-erythritol 2,4-cyclodiphosphate synthase (Treponema denticola (strain ATCC 35405 / DSM 14222 / CIP 103919 / JCM 8153 / KCTC 15104)).